The primary structure comprises 152 residues: MTTQTQHDLAPANQPEFELTVTPVPDEQRIDFWPQYFGAIPQWLLLEPHIFAWMDRFCEGYSGGIWSFYTLSNGGAFMSPEPDNDETWRLFNCLNGNDAQMSAEAAGIAVCLIAYSHHACRTECDAMTAHYYRLREYAMQHPEAHAILRIID.

Belongs to the antirestriction protein family.

This is an uncharacterized protein from Escherichia coli (strain K12).